A 93-amino-acid polypeptide reads, in one-letter code: Translation initiation factor IF-1 (93 aa).

The 72-residue stretch at Met-1 to Lys-72 folds into the S1-like domain. The segment at Arg-70–Arg-93 is disordered.

This sequence belongs to the IF-1 family. As to quaternary structure, component of the 30S ribosomal translation pre-initiation complex which assembles on the 30S ribosome in the order IF-2 and IF-3, IF-1 and N-formylmethionyl-tRNA(fMet); mRNA recruitment can occur at any time during PIC assembly.

Its subcellular location is the cytoplasm. In terms of biological role, one of the essential components for the initiation of protein synthesis. Stabilizes the binding of IF-2 and IF-3 on the 30S subunit to which N-formylmethionyl-tRNA(fMet) subsequently binds. Helps modulate mRNA selection, yielding the 30S pre-initiation complex (PIC). Upon addition of the 50S ribosomal subunit IF-1, IF-2 and IF-3 are released leaving the mature 70S translation initiation complex. In Rhodopseudomonas palustris (strain BisB18), this protein is Translation initiation factor IF-1.